A 370-amino-acid chain; its full sequence is Peptidyl-prolyl cis-trans isomerase D (370 aa).

S5 carries the post-translational modification Phosphoserine. A PPIase cyclophilin-type domain is found at 19-183 (FFDVDIGGER…KLCVIAECGE (165 aa)). N6-acetyllysine is present on K171. Positions 185-215 (KEGDDWGIFPKDGSGDSHPDFPEDADVDLKD) are chaperone activity. S198 is modified (phosphoserine). The segment at 214-370 (KDVDKILLIS…EKAAYAKMFA (157 aa)) is interaction with HSP90AB1. 3 TPR repeats span residues 223–256 (SEDLKNIGNTFFKSQNWEMAIKKYTKVLRYVEGS), 273–306 (LSCVLNIGACKLKMSDWQGAVDSCLEALEIDPSN), and 307–340 (TKALYRRAQGWQGLKEYDQALADLKKAQEIAPED).

The protein belongs to the cyclophilin-type PPIase family. PPIase D subfamily. In terms of assembly, identified in ESR1 or NR3C1/GCR steroid receptor-chaperone complexes. Found in HSP90 chaperone complexes with kinase clients LCK or EIF2AK1. Two monomers associate with one HSP90 homodimer. Interacts with HSP90AA1. Interacts with HSP90AB1; PPID and FKBP4 compete for binding to HSP90AB1 and the interaction is mutually exclusive with the PPID:HSPA8 interaction. Interacts with HSPA8; PPID and STIP1 but not FKBP4 compete for binding to HSPA8 and the interaction is mutually exclusive with the PPID:HSP90AB1 interaction. Interacts with S100A1 and S100A2; the interactions dissociate the PPID:HSP90AA1 interaction. Interacts with S100A6. Interacts with MYB, ILF2, XRCC6, RACK1 and RPS3. Interacts with cytoplasmic dynein 1 intermediate chain (DYNC1I1 or DYNC1I2). In terms of processing, the N-terminus is blocked. Detected in heart, thymis and brain.

It is found in the cytoplasm. It localises to the nucleus. The protein localises to the nucleolus. Its subcellular location is the nucleoplasm. The enzyme catalyses [protein]-peptidylproline (omega=180) = [protein]-peptidylproline (omega=0). Less sensitive to inhibition by cyclosporin A than is CYP-18. PPIase that catalyzes the cis-trans isomerization of proline imidic peptide bonds in oligopeptides and may therefore assist protein folding. Proposed to act as a co-chaperone in HSP90 complexes such as in unligated steroid receptors heterocomplexes. Different co-chaperones seem to compete for association with HSP90 thus establishing distinct HSP90-co-chaperone-receptor complexes with the potential to exert tissue-specific receptor activity control. May have a preference for estrogen receptor complexes and is not found in glucocorticoid receptor complexes. May be involved in cytoplasmic dynein-dependent movement of the receptor from the cytoplasm to the nucleus. May regulate MYB by inhibiting its DNA-binding activity. Involved in regulation of AHR signaling by promoting the formation of the AHR:ARNT dimer; the function is independent of HSP90 but requires the chaperone activity. Involved in regulation of UV radiation-induced apoptosis. The protein is Peptidyl-prolyl cis-trans isomerase D of Bos taurus (Bovine).